A 344-amino-acid chain; its full sequence is Ferredoxin--NADP reductase (344 aa).

FAD contacts are provided by serine 12, aspartate 31, lysine 39, tyrosine 43, valine 83, isoleucine 118, aspartate 285, and serine 326.

It belongs to the ferredoxin--NADP reductase type 2 family. As to quaternary structure, homodimer. The cofactor is FAD.

It carries out the reaction 2 reduced [2Fe-2S]-[ferredoxin] + NADP(+) + H(+) = 2 oxidized [2Fe-2S]-[ferredoxin] + NADPH. This is Ferredoxin--NADP reductase from Staphylococcus aureus (strain JH1).